Reading from the N-terminus, the 78-residue chain is Translation initiation factor IF-1, chloroplastic (78 aa).

Residues 1-72 (MEKQNLIDME…TKGRITYRLR (72 aa)) form the S1-like domain.

Belongs to the IF-1 family. In terms of assembly, component of the 30S ribosomal translation pre-initiation complex which assembles on the 30S ribosome in the order IF-2 and IF-3, IF-1 and N-formylmethionyl-tRNA(fMet); mRNA recruitment can occur at any time during PIC assembly.

Its subcellular location is the plastid. The protein resides in the chloroplast. One of the essential components for the initiation of protein synthesis. Stabilizes the binding of IF-2 and IF-3 on the 30S subunit to which N-formylmethionyl-tRNA(fMet) subsequently binds. Helps modulate mRNA selection, yielding the 30S pre-initiation complex (PIC). Upon addition of the 50S ribosomal subunit IF-1, IF-2 and IF-3 are released leaving the mature 70S translation initiation complex. The polypeptide is Translation initiation factor IF-1, chloroplastic (Anthoceros angustus (Hornwort)).